The sequence spans 240 residues: tRNA (guanine-N(1)-)-methyltransferase (240 aa).

S-adenosyl-L-methionine is bound by residues glycine 110 and 130–135; that span reads IGDYVL.

It belongs to the RNA methyltransferase TrmD family. As to quaternary structure, homodimer.

The protein localises to the cytoplasm. It catalyses the reaction guanosine(37) in tRNA + S-adenosyl-L-methionine = N(1)-methylguanosine(37) in tRNA + S-adenosyl-L-homocysteine + H(+). In terms of biological role, specifically methylates guanosine-37 in various tRNAs. This chain is tRNA (guanine-N(1)-)-methyltransferase, found in Macrococcus caseolyticus (strain JCSC5402) (Macrococcoides caseolyticum).